Here is a 433-residue protein sequence, read N- to C-terminus: Urokinase-type plasminogen activator (433 aa).

Positions 1–20 (MRVLLACLLVCALVVSDSDG) are cleaved as a signal peptide. The EGF-like domain occupies 29–65 (GESNCGCLNGGKCVTYKYFSNIQRCSCPKKFQGEHCE). 6 cysteine pairs are disulfide-bonded: Cys-33-Cys-41, Cys-35-Cys-53, Cys-55-Cys-64, Cys-72-Cys-153, Cys-93-Cys-135, and Cys-124-Cys-148. Residues 36–59 (LNGGKCVTYKYFSNIQRCSCPKKF) are binds urokinase plasminogen activator surface receptor. The 82-residue stretch at 72 to 153 (CYQGNGHSYR…FVQFCMVQDC (82 aa)) folds into the Kringle domain. The connecting peptide stretch occupies residues 154–180 (SVGKSPSSPREKEEFQCGQKALRPRFK). Ser-160 is modified (phosphoserine). Disulfide bonds link Cys-170–Cys-301, Cys-211–Cys-227, Cys-219–Cys-290, Cys-315–Cys-384, Cys-347–Cys-363, and Cys-374–Cys-402. The 246-residue stretch at 181-426 (IVGGQVTNAE…FLPWINTHTR (246 aa)) folds into the Peptidase S1 domain. Catalysis depends on charge relay system residues His-226 and Asp-277. The active-site Charge relay system is the Ser-378.

This sequence belongs to the peptidase S1 family. Found in high and low molecular mass forms. Each consists of two chains, A and B. The high molecular mass form contains a long chain A which is cleaved to yield a short chain A. Forms heterodimer with SERPINA5. Binds LRP1B; binding is followed by internalization and degradation. Interacts with MRC2. Interacts with PLAUR. In complex with SERPINE1, interacts with PLAUR/uPAR. Interacts with SORL1 and LRP1, either alone or in complex with SERPINE1; these interactions are abolished in the presence of LRPAP1/RAP. The ternary complex composed of PLAUR-PLAU-PAI1 also interacts with SORLA. In terms of processing, produced as an inactive single-chain protein (pro-uPA or sc-uPA), is processed into the active disulfide-linked two-chain form of PLAU/uPA by a proteolytic event mediated, at least, by TMPRSS4.

The protein resides in the secreted. It catalyses the reaction Specific cleavage of Arg-|-Val bond in plasminogen to form plasmin.. Inhibited by SERPINA5. Inhibited by SERPINE1. In terms of biological role, specifically cleaves the zymogen plasminogen to form the active enzyme plasmin. The sequence is that of Urokinase-type plasminogen activator (PLAU) from Bos taurus (Bovine).